The chain runs to 595 residues: TNF receptor-associated factor family protein DDB_G0272348 (595 aa).

The disordered stretch occupies residues Ser14–Asn64. Residues Asn17–Asn64 are compositionally biased toward low complexity. An RING-type; degenerate zinc finger spans residues Cys87–Gly134. 2 TRAF-type zinc fingers span residues Glu189–Glu253 and Ser254–Ser311. The stretch at Leu348–Gln410 forms a coiled coil. Residues Gln409–Asn440 are compositionally biased toward low complexity. The disordered stretch occupies residues Gln409 to Gly450. Positions Val441–Gly450 are enriched in polar residues. An MATH domain is found at Val456 to Ile584.

The protein belongs to the TNF receptor-associated factor family. A subfamily.

Its subcellular location is the cytoplasm. In terms of biological role, probable adapter protein and signal transducer that links members of the tumor necrosis factor receptor family to different signaling pathways by association with the receptor cytoplasmic domain and kinases. The chain is TNF receptor-associated factor family protein DDB_G0272348 from Dictyostelium discoideum (Social amoeba).